The primary structure comprises 247 residues: DNA polymerase epsilon subunit D (247 aa).

Residues 128 to 247 (KKHKADKKVP…EGQNSSDDDS (120 aa)) are disordered. The segment covering 150–159 (RLKDNDEQII) has biased composition (basic and acidic residues). 3 stretches are compositionally biased toward acidic residues: residues 165–188 (ADME…NDED), 196–215 (EEEE…EVEE), and 224–247 (EEDE…DDDS).

As to quaternary structure, heterotetramer. Consists of four subunits: POL2, DPB2, DPB3 and DPB4.

It is found in the nucleus. Functionally, as accessory component of the DNA polymerase epsilon (DNA polymerase II) participates in chromosomal DNA replication. This chain is DNA polymerase epsilon subunit D (DPB4), found in Debaryomyces hansenii (strain ATCC 36239 / CBS 767 / BCRC 21394 / JCM 1990 / NBRC 0083 / IGC 2968) (Yeast).